The primary structure comprises 352 residues: Biotin synthase (352 aa).

A Radical SAM core domain is found at 44 to 262 (NRVQVSTLLS…LAVARIMMPK (219 aa)). Residues Cys-59, Cys-63, and Cys-66 each coordinate [4Fe-4S] cluster. 4 residues coordinate [2Fe-2S] cluster: Cys-103, Cys-134, Cys-194, and Arg-266.

The protein belongs to the radical SAM superfamily. Biotin synthase family. In terms of assembly, homodimer. It depends on [4Fe-4S] cluster as a cofactor. Requires [2Fe-2S] cluster as cofactor.

It carries out the reaction (4R,5S)-dethiobiotin + (sulfur carrier)-SH + 2 reduced [2Fe-2S]-[ferredoxin] + 2 S-adenosyl-L-methionine = (sulfur carrier)-H + biotin + 2 5'-deoxyadenosine + 2 L-methionine + 2 oxidized [2Fe-2S]-[ferredoxin]. The protein operates within cofactor biosynthesis; biotin biosynthesis; biotin from 7,8-diaminononanoate: step 2/2. Its function is as follows. Catalyzes the conversion of dethiobiotin (DTB) to biotin by the insertion of a sulfur atom into dethiobiotin via a radical-based mechanism. The chain is Biotin synthase from Ectopseudomonas mendocina (strain ymp) (Pseudomonas mendocina).